The primary structure comprises 489 residues: Rhamnulokinase (489 aa).

Position 13-17 (13-17 (ASSGR)) interacts with ATP. The cysteines at positions 68 and 222 are disulfide-linked. Substrate contacts are provided by residues glycine 83 and 236–238 (HDT). Aspartate 237 (proton acceptor) is an active-site residue. Threonine 259 provides a ligand contact to ATP. Asparagine 296 provides a ligand contact to substrate. Glutamine 304 serves as a coordination point for ATP. Cysteines 353 and 370 form a disulfide. Glycine 402 lines the ATP pocket. Cysteine 413 and cysteine 417 are joined by a disulfide.

Belongs to the rhamnulokinase family. As to quaternary structure, monomer. Requires Mg(2+) as cofactor.

The catalysed reaction is L-rhamnulose + ATP = L-rhamnulose 1-phosphate + ADP + H(+). The protein operates within carbohydrate degradation; L-rhamnose degradation; glycerone phosphate from L-rhamnose: step 2/3. Functionally, involved in the catabolism of L-rhamnose (6-deoxy-L-mannose). Catalyzes the transfer of the gamma-phosphate group from ATP to the 1-hydroxyl group of L-rhamnulose to yield L-rhamnulose 1-phosphate. The polypeptide is Rhamnulokinase (Escherichia coli O17:K52:H18 (strain UMN026 / ExPEC)).